Consider the following 816-residue polypeptide: MLPYVIATLGSAGSTCKASTCSNSTKDYCYSARIRSTVLQGLPFGGVPTVLALDFMCFLALLFVFSILRKVAWDYGRLALVTDADSIASALHSDNHDRYERLTSVSSSVDFDQRDNGFCSWLTAIFRIKDDEIRDKCGGDAVHYLSFQRHIIGLLVAVGVLSVGIVLPVNFSGDLLENNAYSFGRTTIANLNSGNNLLWLHTSFAFLYLLLTVYSMRRHTSKMRYKEDDLVKRTLFINGISKYAEPEKIKKHFEEAYANCTVLEARPCYDVARLMFLDAERRKAERGRIYFTNLQSKENTPSMINPKPCGHLCCCVIRGCEEVEAIEYYTKLEEKLKDDYKREKEKVNEKPLGMAFVTFHNETITAIILKDFNACKCQGCACRGEPRASSCSESLHVSNWTVSYAPDPQNIYWEHLSIRGFIWWIRCLVINVVLFILLFFLTTPAIIITTMDKFNVTKPVEYLNNPIITQFFPTLLLWCFSALLPTIVYYSAFFEAHWTRSGENRTTMHKCYTFLIFMVLLLPSLGLSSLDVFFRWLFDKKFLAEAAVRFECVFLPDNGAFFVNYVIASAFIGNAMDLLRIPGLLMYMIRLCLARSAAERRNVKRHQAYEFQFGAAYAWMMCVFTVVMTYSITCPIIVPFGLMYMLLKHLVDRYNLYYAYLPAKLDKKIHSGAVNQVVAAPILCLFWLLFFSTMRTGFLAPTSMFTFVVLVITIVICLCHVCFGHFKYLSAHNYKIEHTEVDTTESRQNGRPATNLPAPKSAKYIAQVLQDSSPEGEATESEEQGSQDEELITTDGMNDTDFQSCEDSLIENEIRQ.

Residues 1 to 46 (MLPYVIATLGSAGSTCKASTCSNSTKDYCYSARIRSTVLQGLPFGG) lie on the Extracellular side of the membrane. A helical transmembrane segment spans residues 47 to 71 (VPTVLALDFMCFLALLFVFSILRKV). 2 S-palmitoyl cysteine lipidation sites follow: Cys57 and Cys119. Residues 72–138 (AWDYGRLALV…KDDEIRDKCG (67 aa)) are Cytoplasmic-facing. Residues 139 to 171 (GDAVHYLSFQRHIIGLLVAVGVLSVGIVLPVNF) traverse the membrane as a helical segment. Over 172 to 195 (SGDLLENNAYSFGRTTIANLNSGN) the chain is Extracellular. Residues 196-220 (NLLWLHTSFAFLYLLLTVYSMRRHT) traverse the membrane as a helical segment. Residues 221–420 (SKMRYKEDDL…IYWEHLSIRG (200 aa)) lie on the Cytoplasmic side of the membrane. Residues 224–419 (RYKEDDLVKR…NIYWEHLSIR (196 aa)) are intracellular linker IL2; confers mechanosensitivity. 2 S-palmitoyl cysteine lipidation sites follow: Cys375 and Cys391. A helical transmembrane segment spans residues 421-450 (FIWWIRCLVINVVLFILLFFLTTPAIIITT). Topologically, residues 451–465 (MDKFNVTKPVEYLNN) are extracellular. Residues 466–495 (PIITQFFPTLLLWCFSALLPTIVYYSAFFE) form a helical membrane-spanning segment. The Cytoplasmic segment spans residues 496–499 (AHWT). A helical membrane pass occupies residues 500–536 (RSGENRTTMHKCYTFLIFMVLLLPSLGLSSLDVFFRW). Topologically, residues 537–559 (LFDKKFLAEAAVRFECVFLPDNG) are extracellular. Residues 560–592 (AFFVNYVIASAFIGNAMDLLRIPGLLMYMIRLC) form a helical membrane-spanning segment. The interval 560 to 592 (AFFVNYVIASAFIGNAMDLLRIPGLLMYMIRLC) is gating helix. Residues 593–612 (LARSAAERRNVKRHQAYEFQ) are Cytoplasmic-facing. The helical transmembrane segment at 613-631 (FGAAYAWMMCVFTVVMTYS) threads the bilayer. The Extracellular portion of the chain corresponds to 632 to 634 (ITC). The helical transmembrane segment at 635 to 659 (PIIVPFGLMYMLLKHLVDRYNLYYA) threads the bilayer. The Cytoplasmic portion of the chain corresponds to 660–666 (YLPAKLD). A helical membrane pass occupies residues 667 to 695 (KKIHSGAVNQVVAAPILCLFWLLFFSTMR). The Extracellular segment spans residues 696 to 700 (TGFLA). The helical transmembrane segment at 701 to 721 (PTSMFTFVVLVITIVICLCHV) threads the bilayer. 2 S-palmitoyl cysteine lipidation sites follow: Cys719 and Cys722. At 722 to 816 (CFGHFKYLSA…DSLIENEIRQ (95 aa)) the chain is on the cytoplasmic side.

This sequence belongs to the CSC1 (TC 1.A.17) family. Monomer. In terms of processing, palmitoylation is required for localization to the plasma membrane and stability.

The protein localises to the cell membrane. The protein resides in the lysosome membrane. It localises to the early endosome membrane. The enzyme catalyses Ca(2+)(in) = Ca(2+)(out). It carries out the reaction Mg(2+)(in) = Mg(2+)(out). It catalyses the reaction K(+)(in) = K(+)(out). The catalysed reaction is Na(+)(in) = Na(+)(out). The enzyme catalyses Cs(+)(in) = Cs(+)(out). Functionally, mechanosensitive cation channel with low conductance and high activation threshold. Osmosensitive cation channel preferentially activated by hypotonic stress. Also acts as a phospholipid scramblase in response to changes in membrane structure: upon changes in membrane curvature and thickness, alters its conformation and translocates phospholipids, thereby controlling plasma membrane lipid distribution. The chain is Mechanosensitive cation channel TMEM63B from Gallus gallus (Chicken).